Here is a 499-residue protein sequence, read N- to C-terminus: Glutathione reductase, cytosolic (499 aa).

Positions 35, 36, 55, 72, 73, and 81 each coordinate FAD. Serine 35 is a binding site for glutathione. Cysteine 73 and cysteine 78 are disulfide-bonded. Tyrosine 130 provides a ligand contact to glutathione. Residue glycine 146 coordinates FAD. Positions 211, 214, 217, 234, 240, and 297 each coordinate NADP(+). Residues aspartate 338 and threonine 346 each contribute to the FAD site. Alanine 376 is a binding site for NADP(+). Histidine 472 is a binding site for FAD. The active-site Proton acceptor is the histidine 472.

This sequence belongs to the class-I pyridine nucleotide-disulfide oxidoreductase family. In terms of assembly, homodimer. It depends on FAD as a cofactor.

The protein localises to the cytoplasm. The catalysed reaction is 2 glutathione + NADP(+) = glutathione disulfide + NADPH + H(+). Functionally, catalyzes the reduction of glutathione disulfide (GSSG) to reduced glutathione (GSH). Constitutes the major mechanism to maintain a high GSH:GSSG ratio in the cytosol. This is Glutathione reductase, cytosolic from Arabidopsis thaliana (Mouse-ear cress).